We begin with the raw amino-acid sequence, 476 residues long: MKAEAEIIFVTYPSPGHLLVSIEFAKSLIKRDDRIHTITILYWALPLAPQAHLFAKSLVASQPRIRLLALPDVQNPPPLELFFKAPEAYILESTKKTVPLVRDALSTLVSSRKESGSVRVVGLVIDFFCVPMIEVANELNLPSYIFLTCNAGFLSMMKYLPERHRITTSELDLSSGNVEHPIPGYVCSVPTKVLPPGLFVRESYEAWVEIAEKFPGAKGILVNSVTCLEQNAFDYFARLDENYPPVYPVGPVLSLKDRPSPNLDASDRDRIMRWLEDQPESSIVYICFGSLGIIGKLQIEEIAEALELTGHRFLWSIRTNPTEKASPYDLLPEGFLDRTASKGLVCDWAPQVEVLAHKALGGFVSHCGWNSVLESLWFGVPIATWPMYAEQQLNAFSMVKELGLAVELRLDYVSAYGEIVKAEEIAGAIRSLMDGEDTPRKRVKEMAEAARNALMDGGSSFVAVKRFLDELIGGDV.

UDP-alpha-D-glucose-binding positions include Ser290, 349 to 351, 366 to 374, and 388 to 391; these read APQ, HCGWNSVLE, and YAEQ.

Belongs to the UDP-glycosyltransferase family.

Possesses low quercetin 3-O-glucosyltransferase activity in vitro. The protein is UDP-glycosyltransferase 71C3 (UGT71C3) of Arabidopsis thaliana (Mouse-ear cress).